The chain runs to 321 residues: Inner membrane protein YtfF (321 aa).

At 1–4 (MISG) the chain is on the cytoplasmic side. Residues 5 to 25 (VLYALLAGLMWGLIFVGPLIV) form a helical membrane-spanning segment. Residues 13-141 (LMWGLIFVGP…IGIGLACVNI (129 aa)) form the EamA domain. The Periplasmic segment spans residues 26–30 (PEYPA). Residues 31–51 (MLQSMGRYLALGLIALPIAWL) form a helical membrane-spanning segment. Residues 52-65 (GRVRLRQLARRDWL) lie on the Cytoplasmic side of the membrane. The chain crosses the membrane as a helical span at residues 66 to 86 (TALMLTMMGNLIYYFCLASAI). At 87–92 (QRTGAP) the chain is on the periplasmic side. The chain crosses the membrane as a helical span at residues 93–113 (VSTMIIGTLPVVIPVFANLLY). Topologically, residues 114 to 120 (SQRDGKL) are cytoplasmic. A helical membrane pass occupies residues 121-141 (AWGKLAPALICIGIGLACVNI). At 142–154 (AELNHGLPDFDWA) the chain is on the periplasmic side. A helical transmembrane segment spans residues 155 to 175 (RYTSGIVLALVSVVCWAWYAL). At 176–194 (RNARWLRENPDKHPMMWAT) the chain is on the cytoplasmic side. Residues 195–215 (AQALVTLPVSLIGYLVACYWL) traverse the membrane as a helical segment. The Periplasmic segment spans residues 216–230 (NTQTPDFSLPFGPRP). A helical membrane pass occupies residues 231–251 (LVFISLMVAIAVLCSWVGALC). Residues 252–261 (WNVASQLLPT) are Cytoplasmic-facing. Residues 262-282 (VILGPLIVFETLAGLLYTFLL) form a helical membrane-spanning segment. The Periplasmic segment spans residues 283 to 285 (RQQ). The helical transmembrane segment at 286-306 (MPPLMTLSGIALLVIGVVIAV) threads the bilayer. The Cytoplasmic segment spans residues 307 to 321 (RAKPEKPLTESVSES).

The protein resides in the cell inner membrane. In Escherichia coli (strain K12), this protein is Inner membrane protein YtfF (ytfF).